The primary structure comprises 154 residues: Transcriptional repressor NrdR (154 aa).

The interval 1–22 (MECPNCHKNASRVIDSRPSDEN) is disordered. A zinc finger lies at 3 to 34 (CPNCHKNASRVIDSRPSDENRAIRRRRECENC). The 91-residue stretch at 49–139 (LLVIKNDGTR…IYRQFKDVSG (91 aa)) folds into the ATP-cone domain.

Belongs to the NrdR family. Zn(2+) is required as a cofactor.

Negatively regulates transcription of bacterial ribonucleotide reductase nrd genes and operons by binding to NrdR-boxes. This chain is Transcriptional repressor NrdR, found in Lactobacillus gasseri (strain ATCC 33323 / DSM 20243 / BCRC 14619 / CIP 102991 / JCM 1131 / KCTC 3163 / NCIMB 11718 / NCTC 13722 / AM63).